Consider the following 263-residue polypeptide: MASSDGSDVETQSLLNSGDRTLRSWKDTVFPGISWDKSIVWITVAQIIMYIISCVLSRSYEPNERTLMLLGAAYAPAFSNFQLWRVVTPLFLHATILHLVLNLVFILHISLRLEERYGTKKFLVTYFLSAIVGNLLSMLMQPWALSVGASTAGFGIIGGMAAEVSVVWCKLSEELKRIYSMDICILAVLIYFLSFGRTVDTFGHLGGFLAGVALVCYYNKEIEDLPKWFRVLFYGCSALCATILVVSPPLLLLRYPYRVAATS.

6 helical membrane passes run 37-57 (KSIV…CVLS), 86-106 (VVTP…LVFI), 121-141 (KFLV…MLMQ), 142-162 (PWAL…GMAA), 189-209 (LIYF…GGFL), and 231-251 (VLFY…PPLL). Ser150 (nucleophile) is an active-site residue. The active site involves His204.

The protein belongs to the peptidase S54 family.

The protein localises to the membrane. It carries out the reaction Cleaves type-1 transmembrane domains using a catalytic dyad composed of serine and histidine that are contributed by different transmembrane domains.. Functionally, serine protease involved in intramembrane proteolysis and the subsequent release of polypeptides from their membrane anchors. This chain is Rhomboid-like protease 3 (ROM3), found in Toxoplasma gondii.